The primary structure comprises 750 residues: ABC transporter D family member 3 (750 aa).

Positions 1-14 (MKKNNVNNITETLN) are enriched in polar residues. The tract at residues 1–32 (MKKNNVNNITETLNSSSSSSSSSGSSSDEEVK) is disordered. Residues 15 to 26 (SSSSSSSSSGSS) show a composition bias toward low complexity. 4 helical membrane-spanning segments follow: residues 63–83 (IVII…LLFG), 123–143 (FAIG…SIMA), 188–208 (FTTL…VVVY), and 215–235 (TTID…GYFI). An ABC transmembrane type-1 domain is found at 74-362 (PLLLFLLLFG…EQAKQQFEAL (289 aa)). The stretch at 334–370 (ALLKRSNKNIKNEELLVEEEQAKQQFEALLKNKKRVI) forms a coiled coil. A helical membrane pass occupies residues 382–402 (MFTFFSPLINYFIISIPVFFL). Residues 507 to 737 (ITLDDVTYFT…SNNINTINID (231 aa)) enclose the ABC transporter domain. 540–547 (GPSGSGKS) serves as a coordination point for ATP.

Belongs to the ABC transporter superfamily. ABCD family. Peroxisomal fatty acyl CoA transporter (TC 3.A.1.203) subfamily.

Its subcellular location is the membrane. The polypeptide is ABC transporter D family member 3 (abcD3) (Dictyostelium discoideum (Social amoeba)).